The sequence spans 442 residues: D-galactonate dehydratase family member SSLG_02014 (442 aa).

Histidine 161 is a substrate binding site. Tyrosine 197 acts as the Proton donor/acceptor in catalysis. Aspartate 246 contributes to the Mg(2+) binding site. The active-site Proton donor/acceptor is histidine 248. Residues glutamate 272 and glutamate 298 each coordinate Mg(2+). Substrate contacts are provided by glutamate 298, arginine 319, histidine 348, aspartate 352, and glutamate 375.

It belongs to the mandelate racemase/muconate lactonizing enzyme family. GalD subfamily. The cofactor is Mg(2+).

The catalysed reaction is D-mannonate = 2-dehydro-3-deoxy-D-gluconate + H2O. Its function is as follows. Has low D-mannonate dehydratase activity (in vitro), suggesting that this is not a physiological substrate and that it has no significant role in D-mannonate degradation in vivo. Has no detectable activity with a panel of 70 other acid sugars (in vitro). This is D-galactonate dehydratase family member SSLG_02014 from Streptomyces sp. (strain SPB78).